Consider the following 99-residue polypeptide: Acylphosphatase (99 aa).

The Acylphosphatase-like domain maps to 10 to 99 (RLTAFVHGHV…PRGVEGFTER (90 aa)). Catalysis depends on residues arginine 25 and asparagine 43.

This sequence belongs to the acylphosphatase family.

The catalysed reaction is an acyl phosphate + H2O = a carboxylate + phosphate + H(+). The chain is Acylphosphatase (acyP) from Corynebacterium efficiens (strain DSM 44549 / YS-314 / AJ 12310 / JCM 11189 / NBRC 100395).